The primary structure comprises 160 residues: Protein TCP17 (160 aa).

The protein localises to the cytoplasm. This chain is Protein TCP17, found in Trypanosoma cruzi.